The chain runs to 526 residues: Chaperonin GroEL 2 (526 aa).

ATP-binding residues include Lys50, Gly413, and Asp494.

Belongs to the chaperonin (HSP60) family. In terms of assembly, forms a cylinder of 14 subunits composed of two heptameric rings stacked back-to-back. Interacts with the co-chaperonin GroES.

The protein resides in the cytoplasm. It carries out the reaction ATP + H2O + a folded polypeptide = ADP + phosphate + an unfolded polypeptide.. In terms of biological role, together with its co-chaperonin GroES, plays an essential role in assisting protein folding. The GroEL-GroES system forms a nano-cage that allows encapsulation of the non-native substrate proteins and provides a physical environment optimized to promote and accelerate protein folding. The protein is Chaperonin GroEL 2 of Chlamydia pneumoniae (Chlamydophila pneumoniae).